Reading from the N-terminus, the 672-residue chain is Beta-galactosidase GanA (672 aa).

R105 lines the substrate pocket. C109 provides a ligand contact to Zn(2+). N143 lines the substrate pocket. The active-site Proton donor is E144. Zn(2+) contacts are provided by C149, C151, and C154. The Nucleophile role is filled by E308. Residues W316 and 356 to 359 (EKLH) each bind substrate.

It belongs to the glycosyl hydrolase 42 family. Homotrimer.

The enzyme catalyses Hydrolysis of terminal non-reducing beta-D-galactose residues in beta-D-galactosides.. With respect to regulation, inhibited by zinc, cobalt and copper ions. Its function is as follows. Involved in galactan degradation. Hydrolyzes galactooligosaccharides released by the endo-beta-1,4-galactanase GanB from galactan. Degrades galactotetraose, galactotriose and galactobiose, generating galactose as the end product. It is unable to use lactose. In vitro, shows maximal activity with o-nitrophenyl-beta-D-galactopyranoside (ONPG) and p-nitrophenyl-beta-D-galactopyranoside (PNPG) as substrates, trace activity with p-nitrophenyl-alpha-L-arabinopyranoside and o-nitrophenyl-beta-D-fucopyranoside as substrates, but no activity with p-nitrophenyl-alpha-D-galactopyranoside, p-nitrophenyl-beta-D-glucopyranoside, o-nitrophenyl-beta-D-xylopyranoside, p-nitrophenyl-beta-D-mannopyranoside or p-nitrophenyl-alpha-L-arabinofuranoside as substrates. This chain is Beta-galactosidase GanA, found in Bacillus subtilis (strain 168).